The sequence spans 550 residues: Transcription factor p65 (550 aa).

Met-1 bears the N-acetylmethionine mark. The RHD domain occupies 16–190; that stretch reads ASGPYVEIIE…HPIFDNRAPN (175 aa). Residue Lys-37 forms a Glycyl lysine isopeptide (Lys-Gly) (interchain with G-Cter in SUMO3) linkage. Cys-38 carries the cysteine persulfide; alternate modification. Cys-38 bears the S-nitrosocysteine; alternate mark. N6-acetyllysine occurs at positions 122, 123, 218, and 221. Glycyl lysine isopeptide (Lys-Gly) (interchain with G-Cter in SUMO3); alternate cross-links involve residues Lys-122 and Lys-123. Thr-254 carries the post-translational modification Phosphothreonine. A phosphoserine mark is found at Ser-276 and Ser-281. The Nuclear localization signal motif lies at 301–304; it reads KRKR. Residue Lys-310 is modified to N6-acetyllysine; alternate. Lys-310 carries the N6-methyllysine modification. Ser-311 carries the phosphoserine modification. Transcriptional activation domain regions lie at residues 342-388 and 414-476; these read PKPA…APVL and PGPP…EFQQ. Thr-434 carries the post-translational modification Phosphothreonine. Position 468 is a phosphoserine (Ser-468). Residue Thr-505 is modified to Phosphothreonine. A transcriptional activation domain 2 region spans residues 520–550; it reads TSGLPNGLSGDEDFSSIADMDFSALLSQISS. Residue Ser-535 is modified to Phosphoserine. The 9aaTAD signature appears at 535-543; that stretch reads SIADMDFSA.

In terms of assembly, component of the NF-kappa-B p65-p50 complex. Component of the NF-kappa-B p65-c-Rel complex. Homodimer; component of the NF-kappa-B p65-p65 complex. Component of the NF-kappa-B p65-p52 complex. May interact with ETHE1. Binds TLE5 and TLE1. Interacts with TP53BP2. Binds to and is phosphorylated by the activated form of either RPS6KA4 or RPS6KA5. Interacts with ING4 and this interaction may be indirect. Interacts with CARM1, USP48 and UNC5CL. Interacts with IRAK1BP1. Interacts with NFKBID. Interacts with NFKBIA. Interacts with GSK3B. Interacts with NFKBIB. Interacts with NFKBIE. Interacts with NFKBIZ. Interacts with EHMT1 (via ANK repeats). Part of a 70-90 kDa complex at least consisting of CHUK, IKBKB, NFKBIA, RELA, ELP1 and MAP3K14. Interacts with HDAC3; HDAC3 mediates the deacetylation of RELA. Interacts with HDAC1; the interaction requires non-phosphorylated RELA. Interacts with CBP; the interaction requires phosphorylated RELA. Interacts (phosphorylated at 'Thr-254') with PIN1; the interaction inhibits p65 binding to NFKBIA. Interacts with SOCS1. Interacts with UXT. Interacts with MTDH and PHF11. Interacts with ARRB2. Interacts with NFKBIA (when phosphorylated), the interaction is direct; phosphorylated NFKBIA is part of a SCF(BTRC)-like complex lacking CUL1. Interacts with RNF25. Interacts (via C-terminus) with DDX1. Interacts with UFL1 and COMMD1. Interacts with BRMS1; this promotes deacetylation of 'Lys-310'. Interacts with NOTCH2. Directly interacts with MEN1; this interaction represses NFKB-mediated transactivation. Interacts with AKIP1, which promotes the phosphorylation and nuclear retention of RELA. Interacts (via the RHD) with GFI1; the interaction, after bacterial lipopolysaccharide (LPS) stimulation, inhibits the transcriptional activity by interfering with the DNA-binding activity to target gene promoter DNA. Interacts (when acetylated at Lys-310) with BRD4; leading to activation of the NF-kappa-B pathway. Interacts with MEFV. Interacts with CLOCK. Interacts (via N-terminus) with CPEN1; this interaction induces proteolytic cleavage of p65/RELA subunit and inhibition of NF-kappa-B transcriptional activity. Interacts with FOXP3. Interacts with CDK5RAP3; stimulates the interaction of RELA with HDAC1, HDAC2 and HDAC3 thereby inhibiting NF-kappa-B transcriptional activity. Interacts with DHX9; this interaction is direct and activates NF-kappa-B-mediated transcription. Interacts with LRRC25. Interacts with TBX21. Interacts with KAT2A. Interacts with ZBTB7A; involved in the control by RELA of the accessibility of target gene promoters. Directly interacts with DDX3X; this interaction may trap RELA in the cytoplasm, impairing nuclear relocalization upon TNF activating signals. Interacts with PHF2. Interacts with MKRN2; the interaction leads to its polyubiquitination and proteasome-dependent degradation. Interacts with ECSIT. Interacts with RAB28; the interaction contributes to RELA transport from cytoplasm to nucleus. Ubiquitinated by RNF182, leading to its proteasomal degradation. Degradation is required for termination of NF-kappa-B response. Polyubiquitinated via 'Lys-29'-linked ubiquitin; leading to lysosomal degradation. In terms of processing, monomethylated at Lys-310 by SETD6. Monomethylation at Lys-310 is recognized by the ANK repeats of EHMT1 and promotes the formation of repressed chromatin at target genes, leading to down-regulation of NF-kappa-B transcription factor activity. Phosphorylation at Ser-311 disrupts the interaction with EHMT1 without preventing monomethylation at Lys-310 and relieves the repression of target genes. Post-translationally, phosphorylation at Ser-311 disrupts the interaction with EHMT1 and promotes transcription factor activity. Phosphorylation on Ser-535 stimulates acetylation on Lys-310 and interaction with CBP; the phosphorylated and acetylated forms show enhanced transcriptional activity. Phosphorylation at Ser-276 by RPS6KA4 and RPS6KA5 promotes its transactivation and transcriptional activities. Phosphorylation at Ser-75 by herpes simplex virus 1/HHV-1 inhibits NF-kappa-B activation. In terms of processing, reversibly acetylated; the acetylation seems to be mediated by CBP, the deacetylation by HDAC3 and SIRT2. Acetylation at Lys-122 enhances DNA binding and impairs association with NFKBIA. Acetylation at Lys-310 is required for full transcriptional activity in the absence of effects on DNA binding and NFKBIA association. Acetylation at Lys-310 promotes interaction with BRD4. Acetylation can also lower DNA-binding and results in nuclear export. Interaction with BRMS1 promotes deacetylation of Lys-310. Lys-310 is deacetylated by SIRT2. Post-translationally, S-nitrosylation of Cys-38 inactivates the enzyme activity. Sulfhydration at Cys-38 mediates the anti-apoptotic activity by promoting the interaction with RPS3 and activating the transcription factor activity. In terms of processing, sumoylation by PIAS3 negatively regulates DNA-bound activated NF-kappa-B. Post-translationally, proteolytically cleaved within a conserved N-terminus region required for base-specific contact with DNA in a CPEN1-mediated manner, and hence inhibits NF-kappa-B transcriptional activity.

Its subcellular location is the nucleus. It localises to the cytoplasm. Its function is as follows. NF-kappa-B is a pleiotropic transcription factor present in almost all cell types and is the endpoint of a series of signal transduction events that are initiated by a vast array of stimuli related to many biological processes such as inflammation, immunity, differentiation, cell growth, tumorigenesis and apoptosis. NF-kappa-B is a homo- or heterodimeric complex formed by the Rel-like domain-containing proteins RELA/p65, RELB, NFKB1/p105, NFKB1/p50, REL and NFKB2/p52. The heterodimeric RELA-NFKB1 complex appears to be most abundant one. The dimers bind at kappa-B sites in the DNA of their target genes and the individual dimers have distinct preferences for different kappa-B sites that they can bind with distinguishable affinity and specificity. Different dimer combinations act as transcriptional activators or repressors, respectively. The NF-kappa-B heterodimeric RELA-NFKB1 and RELA-REL complexes, for instance, function as transcriptional activators. NF-kappa-B is controlled by various mechanisms of post-translational modification and subcellular compartmentalization as well as by interactions with other cofactors or corepressors. NF-kappa-B complexes are held in the cytoplasm in an inactive state complexed with members of the NF-kappa-B inhibitor (I-kappa-B) family. In a conventional activation pathway, I-kappa-B is phosphorylated by I-kappa-B kinases (IKKs) in response to different activators, subsequently degraded thus liberating the active NF-kappa-B complex which translocates to the nucleus. The inhibitory effect of I-kappa-B on NF-kappa-B through retention in the cytoplasm is exerted primarily through the interaction with RELA. RELA shows a weak DNA-binding site which could contribute directly to DNA binding in the NF-kappa-B complex. Besides its activity as a direct transcriptional activator, it is also able to modulate promoters accessibility to transcription factors and thereby indirectly regulate gene expression. Associates with chromatin at the NF-kappa-B promoter region via association with DDX1. Essential for cytokine gene expression in T-cells. The NF-kappa-B homodimeric RELA-RELA complex appears to be involved in invasin-mediated activation of IL-8 expression. Key transcription factor regulating the IFN response during SARS-CoV-2 infection. This Rattus norvegicus (Rat) protein is Transcription factor p65.